A 150-amino-acid chain; its full sequence is Large ribosomal subunit protein uL15 (150 aa).

Residues 1–15 (MNLSNLQPAEGSTHN) are compositionally biased toward polar residues. Residues 1-53 (MNLSNLQPAEGSTHNQNKRVGRGEGSGKGGTAARGHKGAKSRSGYSKKIGFEG) are disordered. The segment covering 23–32 (GEGSGKGGTA) has biased composition (gly residues).

Belongs to the universal ribosomal protein uL15 family. Part of the 50S ribosomal subunit.

In terms of biological role, binds to the 23S rRNA. The sequence is that of Large ribosomal subunit protein uL15 from Flavobacterium johnsoniae (strain ATCC 17061 / DSM 2064 / JCM 8514 / BCRC 14874 / CCUG 350202 / NBRC 14942 / NCIMB 11054 / UW101) (Cytophaga johnsonae).